Here is a 112-residue protein sequence, read N- to C-terminus: Putative pterin-4-alpha-carbinolamine dehydratase (112 aa).

The disordered stretch occupies residues 1–30 (MSDELQSRTCTPCRGDVPPMTKAEAKRQLA).

This sequence belongs to the pterin-4-alpha-carbinolamine dehydratase family.

It catalyses the reaction (4aS,6R)-4a-hydroxy-L-erythro-5,6,7,8-tetrahydrobiopterin = (6R)-L-erythro-6,7-dihydrobiopterin + H2O. The polypeptide is Putative pterin-4-alpha-carbinolamine dehydratase (Aromatoleum aromaticum (strain DSM 19018 / LMG 30748 / EbN1) (Azoarcus sp. (strain EbN1))).